Consider the following 64-residue polypeptide: Large ribosomal subunit protein bL33c (64 aa).

It belongs to the bacterial ribosomal protein bL33 family.

The protein resides in the plastid. Its subcellular location is the chloroplast. The protein is Large ribosomal subunit protein bL33c (rpl33) of Trieres chinensis (Marine centric diatom).